Reading from the N-terminus, the 38-residue chain is Phi-Lf prophage-derived putative minor coat protein (38 aa).

This chain is Phi-Lf prophage-derived putative minor coat protein (gIX-1), found in Xanthomonas campestris pv. campestris (strain ATCC 33913 / DSM 3586 / NCPPB 528 / LMG 568 / P 25).